The sequence spans 870 residues: Phycobiliprotein ApcE (870 aa).

Cys-184 is a binding site for (2R,3E)-phycocyanobilin. PBS-linker domains lie at 241-421, 482-665, and 679-856; these read DLQG…FRTI, GAGI…KIEK, and SSLN…KQNR.

The protein belongs to the phycobilisome linker protein family. Contains one covalently linked bilin chromophore. This protein autochromophorylates (Potential).

It is found in the plastid. The protein localises to the chloroplast thylakoid membrane. Functionally, this protein is postulated to act both as terminal energy acceptor and as a linker polypeptide that stabilizes the phycobilisome architecture. May have intrinsic bilin lyase activity. In Cyanidium caldarium (Red alga), this protein is Phycobiliprotein ApcE (apcE).